The chain runs to 393 residues: Endoglucanase 1 (393 aa).

The signal sequence occupies residues 1–26 (MAFKLNIGLLALSLSLSLVHLDGVRA). The active-site Nucleophile is Asp34. The active-site Proton donor is the Asp152. The disordered stretch occupies residues 233 to 393 (GCQRKDDNTI…GGHKKCHKKH (161 aa)). Low complexity-rich tracts occupy residues 319-329 (QGSSNGDATTG) and 337-370 (DSGS…NPGA). A glycan (N-linked (GlcNAc...) asparagine) is linked at Asn343. Residues 371-384 (AQGGQGGAQPGPSG) show a composition bias toward gly residues.

This sequence belongs to the glycosyl hydrolase 45 (cellulase K) family. Post-translationally, may also be O-glycosylated. In terms of tissue distribution, hyphal tip.

It localises to the secreted. It carries out the reaction Endohydrolysis of (1-&gt;4)-beta-D-glucosidic linkages in cellulose, lichenin and cereal beta-D-glucans.. This is Endoglucanase 1 (EGL1) from Mycosarcoma maydis (Corn smut fungus).